The following is a 208-amino-acid chain: Holliday junction branch migration complex subunit RuvA (208 aa).

Residues 1–63 are domain I; sequence MIGMLTGRVE…QDSVTLYGFL (63 aa). A domain II region spans residues 64 to 142; the sequence is DRDSKRVFLQ…LNQSDDASAG (79 aa). The flexible linker stretch occupies residues 143–151; that stretch reads NAPYQPTVD. The interval 151–208 is domain III; that stretch reads DAGVEQVVEGLVSLGWRQQDAQRAVNEACAENDVPMPLASDDAPRVLRLALARMDRGR.

It belongs to the RuvA family. As to quaternary structure, homotetramer. Forms an RuvA(8)-RuvB(12)-Holliday junction (HJ) complex. HJ DNA is sandwiched between 2 RuvA tetramers; dsDNA enters through RuvA and exits via RuvB. An RuvB hexamer assembles on each DNA strand where it exits the tetramer. Each RuvB hexamer is contacted by two RuvA subunits (via domain III) on 2 adjacent RuvB subunits; this complex drives branch migration. In the full resolvosome a probable DNA-RuvA(4)-RuvB(12)-RuvC(2) complex forms which resolves the HJ.

The protein localises to the cytoplasm. In terms of biological role, the RuvA-RuvB-RuvC complex processes Holliday junction (HJ) DNA during genetic recombination and DNA repair, while the RuvA-RuvB complex plays an important role in the rescue of blocked DNA replication forks via replication fork reversal (RFR). RuvA specifically binds to HJ cruciform DNA, conferring on it an open structure. The RuvB hexamer acts as an ATP-dependent pump, pulling dsDNA into and through the RuvAB complex. HJ branch migration allows RuvC to scan DNA until it finds its consensus sequence, where it cleaves and resolves the cruciform DNA. The polypeptide is Holliday junction branch migration complex subunit RuvA (Bifidobacterium longum subsp. infantis (strain ATCC 15697 / DSM 20088 / JCM 1222 / NCTC 11817 / S12)).